Consider the following 249-residue polypeptide: uncharacterized protein (249 aa).

11–34 (IFGGRSQIGGELARRLAAGATMVL) lines the NADP(+) pocket. A substrate-binding site is contributed by S142. Residue Y155 is the Proton acceptor of the active site.

This sequence belongs to the short-chain dehydrogenases/reductases (SDR) family.

This is an uncharacterized protein from Mycobacterium tuberculosis (strain CDC 1551 / Oshkosh).